A 134-amino-acid polypeptide reads, in one-letter code: Small ribosomal subunit protein bS16 (134 aa).

Residues 105–134 (QNERREKRLAIKTRRRQAKKAAEAEGQESA) are disordered. Over residues 114–123 (AIKTRRRQAK) the composition is skewed to basic residues.

The protein belongs to the bacterial ribosomal protein bS16 family.

The polypeptide is Small ribosomal subunit protein bS16 (Chlorobium phaeobacteroides (strain BS1)).